Reading from the N-terminus, the 268-residue chain is Octanoyltransferase (268 aa).

The region spanning 73–261 (GEADELVWLL…AFEEVFGPAV (189 aa)) is the BPL/LPL catalytic domain. Substrate-binding positions include 112 to 119 (RGGEYTYH), 192 to 194 (ALG), and 205 to 207 (GLS). Cys-223 acts as the Acyl-thioester intermediate in catalysis.

It belongs to the LipB family.

It localises to the cytoplasm. It carries out the reaction octanoyl-[ACP] + L-lysyl-[protein] = N(6)-octanoyl-L-lysyl-[protein] + holo-[ACP] + H(+). Its pathway is protein modification; protein lipoylation via endogenous pathway; protein N(6)-(lipoyl)lysine from octanoyl-[acyl-carrier-protein]: step 1/2. Catalyzes the transfer of endogenously produced octanoic acid from octanoyl-acyl-carrier-protein onto the lipoyl domains of lipoate-dependent enzymes. Lipoyl-ACP can also act as a substrate although octanoyl-ACP is likely to be the physiological substrate. In Agrobacterium fabrum (strain C58 / ATCC 33970) (Agrobacterium tumefaciens (strain C58)), this protein is Octanoyltransferase.